Here is a 488-residue protein sequence, read N- to C-terminus: Putative BTB/POZ domain-containing protein L674 (488 aa).

The 68-residue stretch at 83-150 (NIVYFNIGGK…VKNQKCPINN (68 aa)) folds into the BTB domain.

It belongs to the mimivirus BTB/WD family.

The polypeptide is Putative BTB/POZ domain-containing protein L674 (Acanthamoeba polyphaga (Amoeba)).